The primary structure comprises 223 residues: Deoxyribose-phosphate aldolase (223 aa).

The Proton donor/acceptor role is filled by Asp89. Lys152 (schiff-base intermediate with acetaldehyde) is an active-site residue. Residue Lys181 is the Proton donor/acceptor of the active site.

It belongs to the DeoC/FbaB aldolase family. DeoC type 1 subfamily.

The protein resides in the cytoplasm. The catalysed reaction is 2-deoxy-D-ribose 5-phosphate = D-glyceraldehyde 3-phosphate + acetaldehyde. The protein operates within carbohydrate degradation; 2-deoxy-D-ribose 1-phosphate degradation; D-glyceraldehyde 3-phosphate and acetaldehyde from 2-deoxy-alpha-D-ribose 1-phosphate: step 2/2. Catalyzes a reversible aldol reaction between acetaldehyde and D-glyceraldehyde 3-phosphate to generate 2-deoxy-D-ribose 5-phosphate. The protein is Deoxyribose-phosphate aldolase of Bacillus cereus (strain B4264).